We begin with the raw amino-acid sequence, 581 residues long: Intermediate filament protein ifa-2 (581 aa).

Disordered regions lie at residues 1–35 and 47–68; these read MTDPDSYRSSITSRPSFNRTVTSSSQNYGAPGSGN and SSVSSGLSPYGQNAASTIRDNR. The tract at residues 1–74 is head; it reads MTDPDSYRSS…RDNREREKKE (74 aa). A compositionally biased stretch (polar residues) spans 7–28; sequence YRSSITSRPSFNRTVTSSSQNY. An IF rod domain is found at 71 to 424; the sequence is EKKEIMELND…QMLEGNSEGN (354 aa). The coil 1A stretch occupies residues 75–106; the sequence is IMELNDRLASYIEKVRFLDAQNRKLDADLKML. The segment at 107-120 is linker 1; it reads QGRFGKSTGSVKVM. The segment at 121-258 is coil 1B; the sequence is YEMEITTATN…RGFETELKEL (138 aa). Residues 259–276 are linker 12; it reads QAQAARDTTSENREYFKN. Residues 277–424 form a coil 2 region; the sequence is ELANAMRDIR…QMLEGNSEGN (148 aa). Residues 425–578 form a tail region; that stretch reads GLRQLVEKVV…THIQRQSQQT (154 aa). The interval 449-469 is disordered; sequence RVVKGEHSSRTSYQRSAKGNV. The 118-residue stretch at 457-574 folds into the LTD domain; the sequence is SRTSYQRSAK…EERATHIQRQ (118 aa).

It belongs to the intermediate filament family. Forms some heteromeric filaments with ifb-1. In terms of tissue distribution, mainly expressed in regions of the hypodermis adjacent to muscle. Expressed in longitudinal stripes where the mechanosensory neurons interface with the hypodermis. Also expressed to the uterine seam and within the uterine-vulval cells.

It localises to the cell junction. It is found in the hemidesmosome. Its function is as follows. Cytoplasmic intermediate filaments provide mechanical strength to cells. Essential protein, involved in attachment structures in epidermal cells that connect muscles to the external cuticle. Probably acts by forming hypodermal hemidesmosome complexes that help mediate muscle-cuticle force transduction. Although expressed during embryogenesis, it is not required for embryonic development of muscle-cuticle linkages nor for the localization of other proteins to the hemidesmosomes in embryos. This is Intermediate filament protein ifa-2 from Caenorhabditis elegans.